Consider the following 255-residue polypeptide: MRILIANDDGYLAPGIAALVKACEGLGTIDVIAPEQNASGTSNALTLNRPLSVFEARGEPVQGFRVVNGTPSDSVHVALTGLLPHKPDLVLSGINQGANMGDDTLYSGTVAAAMEGYLFGVPAIAFSQAEKGWTHLDAAAATARAIVEQVLAGGPPTGPWLLNVNIPNRADAASLPRLVTRLGRRHASEPVIRQTNPRGEPIYWIGPAGDARDAGEGTDFHAVAHGAVSITPLQVDLTDHAMRGAWASRLGVPLA.

The a divalent metal cation site is built by aspartate 8, aspartate 9, serine 39, and asparagine 95.

Belongs to the SurE nucleotidase family. The cofactor is a divalent metal cation.

Its subcellular location is the cytoplasm. It catalyses the reaction a ribonucleoside 5'-phosphate + H2O = a ribonucleoside + phosphate. Nucleotidase that shows phosphatase activity on nucleoside 5'-monophosphates. The protein is 5'-nucleotidase SurE of Rubrivivax gelatinosus (strain NBRC 100245 / IL144).